The primary structure comprises 273 residues: GDNF family receptor alpha-4 (273 aa).

N-linked (GlcNAc...) asparagine glycosylation is present at Asn-192. Asn-250 carries GPI-anchor amidated asparagine lipidation. Positions 251–273 are cleaved as a propeptide — removed in mature form; that stretch reads AGCCFLWVSSMSILTALALQALL.

This sequence belongs to the GDNFR family. Interacts with ARTN ligand and RET: forms a 2:2:2 ternary complex composed of ARTN ligand, GFRA3 and RET receptor. Interacts with SORL1. In terms of tissue distribution, weakly expressed in heart, brain and testis.

The protein localises to the cell membrane. The protein resides in the secreted. In terms of biological role, receptor for persephin (PSPN), a growth factor that exhibits neurotrophic activity on mesencephalic dopaminergic and motor neurons. Acts by binding to its coreceptor, GFRA4, leading to autophosphorylation and activation of the RET receptor. May be important in C-cell development and, in the postnatal development of the adrenal medulla. The chain is GDNF family receptor alpha-4 (Gfra4) from Rattus norvegicus (Rat).